The following is a 352-amino-acid chain: Holliday junction branch migration complex subunit RuvB (352 aa).

A large ATPase domain (RuvB-L) region spans residues 4-191 (TDKFSAPDRV…FGIVARLEFY (188 aa)). ATP is bound by residues Leu-30, Arg-31, Gly-72, Lys-75, Thr-76, Thr-77, 138 to 140 (EDY), Arg-181, Tyr-191, and Arg-228. Thr-76 provides a ligand contact to Mg(2+). The segment at 192-262 (TAEELARIVT…IADAALAMLD (71 aa)) is small ATPAse domain (RuvB-S). Positions 265 to 352 (RVGFDLMDRK…GDSGDLIDGE (88 aa)) are head domain (RuvB-H). DNA is bound by residues Arg-301, Arg-320, and Arg-325.

The protein belongs to the RuvB family. Homohexamer. Forms an RuvA(8)-RuvB(12)-Holliday junction (HJ) complex. HJ DNA is sandwiched between 2 RuvA tetramers; dsDNA enters through RuvA and exits via RuvB. An RuvB hexamer assembles on each DNA strand where it exits the tetramer. Each RuvB hexamer is contacted by two RuvA subunits (via domain III) on 2 adjacent RuvB subunits; this complex drives branch migration. In the full resolvosome a probable DNA-RuvA(4)-RuvB(12)-RuvC(2) complex forms which resolves the HJ.

It is found in the cytoplasm. It catalyses the reaction ATP + H2O = ADP + phosphate + H(+). The RuvA-RuvB-RuvC complex processes Holliday junction (HJ) DNA during genetic recombination and DNA repair, while the RuvA-RuvB complex plays an important role in the rescue of blocked DNA replication forks via replication fork reversal (RFR). RuvA specifically binds to HJ cruciform DNA, conferring on it an open structure. The RuvB hexamer acts as an ATP-dependent pump, pulling dsDNA into and through the RuvAB complex. RuvB forms 2 homohexamers on either side of HJ DNA bound by 1 or 2 RuvA tetramers; 4 subunits per hexamer contact DNA at a time. Coordinated motions by a converter formed by DNA-disengaged RuvB subunits stimulates ATP hydrolysis and nucleotide exchange. Immobilization of the converter enables RuvB to convert the ATP-contained energy into a lever motion, pulling 2 nucleotides of DNA out of the RuvA tetramer per ATP hydrolyzed, thus driving DNA branch migration. The RuvB motors rotate together with the DNA substrate, which together with the progressing nucleotide cycle form the mechanistic basis for DNA recombination by continuous HJ branch migration. Branch migration allows RuvC to scan DNA until it finds its consensus sequence, where it cleaves and resolves cruciform DNA. The chain is Holliday junction branch migration complex subunit RuvB from Cupriavidus pinatubonensis (strain JMP 134 / LMG 1197) (Cupriavidus necator (strain JMP 134)).